The chain runs to 923 residues: Glucosidase 2 subunit alpha (923 aa).

Residues 1–25 (MRYHGICWFIFQAAIIFAIFGSCQG) form the signal peptide. A glycan (N-linked (GlcNAc...) asparagine) is linked at asparagine 262. Aspartate 524 (nucleophile) is an active-site residue. Glutamate 527 is a catalytic residue. Residue asparagine 563 is glycosylated (N-linked (GlcNAc...) asparagine). Aspartate 600 acts as the Proton donor in catalysis. A glycan (N-linked (GlcNAc...) asparagine) is linked at asparagine 822.

The protein belongs to the glycosyl hydrolase 31 family. In terms of assembly, heterodimer of a catalytic subunit alpha (gls2) and a subunit beta (gtb1).

It is found in the endoplasmic reticulum. The enzyme catalyses N(4)-(alpha-D-Glc-(1-&gt;3)-alpha-D-Man-(1-&gt;2)-alpha-D-Man-(1-&gt;2)-alpha-D-Man-(1-&gt;3)-[alpha-D-Man-(1-&gt;2)-alpha-D-Man-(1-&gt;3)-[alpha-D-Man-(1-&gt;2)-alpha-D-Man-(1-&gt;6)]-alpha-D-Man-(1-&gt;6)]-beta-D-Man-(1-&gt;4)-beta-D-GlcNAc-(1-&gt;4)-beta-D-GlcNAc)-L-asparaginyl-[protein] + H2O = N(4)-(alpha-D-Man-(1-&gt;2)-alpha-D-Man-(1-&gt;2)-alpha-D-Man-(1-&gt;3)-[alpha-D-Man-(1-&gt;2)-alpha-D-Man-(1-&gt;3)-[alpha-D-Man-(1-&gt;2)-alpha-D-Man-(1-&gt;6)]-alpha-D-Man-(1-&gt;6)]-beta-D-Man-(1-&gt;4)-beta-D-GlcNAc-(1-&gt;4)-beta-D-GlcNAc)-L-asparaginyl-[protein] (N-glucan mannose isomer 9A1,2,3B1,2,3) + beta-D-glucose. The catalysed reaction is N(4)-(alpha-D-Glc-(1-&gt;3)-alpha-D-Glc-(1-&gt;3)-alpha-D-Man-(1-&gt;2)-alpha-D-Man-(1-&gt;2)-alpha-D-Man-(1-&gt;3)-[alpha-D-Man-(1-&gt;2)-alpha-D-Man-(1-&gt;3)-[alpha-D-Man-(1-&gt;2)-alpha-D-Man-(1-&gt;6)]-alpha-D-Man-(1-&gt;6)]-beta-D-Man-(1-&gt;4)-beta-D-GlcNAc-(1-&gt;4)-beta-D-GlcNAc)-L-asparaginyl-[protein] + H2O = N(4)-(alpha-D-Glc-(1-&gt;3)-alpha-D-Man-(1-&gt;2)-alpha-D-Man-(1-&gt;2)-alpha-D-Man-(1-&gt;3)-[alpha-D-Man-(1-&gt;2)-alpha-D-Man-(1-&gt;3)-[alpha-D-Man-(1-&gt;2)-alpha-D-Man-(1-&gt;6)]-alpha-D-Man-(1-&gt;6)]-beta-D-Man-(1-&gt;4)-beta-D-GlcNAc-(1-&gt;4)-beta-D-GlcNAc)-L-asparaginyl-[protein] + beta-D-glucose. It functions in the pathway glycan metabolism; N-glycan metabolism. Its function is as follows. Catalytic subunit of glucosidase 2, which cleaves sequentially the 2 innermost alpha-1,3-linked glucose residues from the Glc(2)Man(9)GlcNAc(2) oligosaccharide precursor of immature glycoproteins. The protein is Glucosidase 2 subunit alpha of Schizosaccharomyces pombe (strain 972 / ATCC 24843) (Fission yeast).